The sequence spans 457 residues: MSGTRASNDRPPGTGGVKRGRLQQEAAATGSRVTVVLGAQWGDEGKGKVVDLLATDADIVSRCQGGNNAGHTVVVDGKEYDFHLLPSGIINTKAVSFIGNGVVIHLPGLFEEAEKNEKKGLKDWEKRLIISDRAHLVFDFHQAVDGLQEVQRQAQEGKNIGTTKKGIGPTYSSKAARTGLRICDLLSDFDEFSARFKNLAHQHQSMFPTLEIDVEGQLKRLKGFAERIRPMVRDGVYFMYEALHGPPKKVLVEGANAALLDIDFGTYPFVTSSNCTVGGVCTGLGIPPQNIGDVYGVVKAYTTRVGIGAFPTEQINEIGDLLQNRGHEWGVTTGRKRRCGWLDLMILRYAHMVNGFTALALTKLDILDVLSEIKVGISYKLNGKRIPYFPANQEILQKVEVEYETLPGWKADTTGARKWEDLPPQAQSYVRFVENHMGVAVKWVGVGKSRESMIQLF.

The interval 1-24 is disordered; it reads MSGTRASNDRPPGTGGVKRGRLQQ. Residues 42–48 and 70–72 contribute to the GTP site; these read GDEGKGK and GHT. The active-site Proton acceptor is the Asp43. Residues Asp43 and Gly70 each contribute to the Mg(2+) site. Residue Asp43 coordinates substrate. Residues 43–46, 68–71, Thr163, Arg177, Asn256, Thr271, and Arg335 contribute to the IMP site; these read DEGK and NAGH. His71 serves as the catalytic Proton donor. Position 331-337 (331-337) interacts with substrate; sequence VTTGRKR. GTP contacts are provided by residues Arg337, 363-365, and 445-448; these read KLD and GVGK.

The protein belongs to the adenylosuccinate synthetase family. As to quaternary structure, homodimer. Mg(2+) is required as a cofactor. High levels in muscle.

It is found in the cytoplasm. The protein resides in the membrane. The enzyme catalyses IMP + L-aspartate + GTP = N(6)-(1,2-dicarboxyethyl)-AMP + GDP + phosphate + 2 H(+). The protein operates within purine metabolism; AMP biosynthesis via de novo pathway; AMP from IMP: step 1/2. With respect to regulation, weakly inhibited by AMP non-competitively to all substrates. Inhibited by IMP non-competitively with respect to GTP. Inhibited by fructose 1,6-bisphosphate competitively with respect to IMP. Its function is as follows. Component of the purine nucleotide cycle (PNC), which interconverts IMP and AMP to regulate the nucleotide levels in various tissues, and which contributes to glycolysis and ammoniagenesis. Catalyzes the first committed step in the biosynthesis of AMP from IMP. This is Adenylosuccinate synthetase isozyme 1 (Adss1) from Mus musculus (Mouse).